A 592-amino-acid polypeptide reads, in one-letter code: MGEDQRNLFIALGLILVILTGYQMFVMGPAEEERRAEQAAVEASQELADPDLPASALEPAAATTVDRETALGGNQRVTIDAPSVLGSLSLTGARLDDVRLRRHTETIDDDTPVALLNPIGSDHVFYARDGWTSATSGFTDLPGGSTEWTLASGSTLTPDTPITLTYDSPSGLHFERVISVDDNYLFTLTDTVTNNSGQEVELSRYGLVRHEGRPEDETRNMAVFEGALAVIDGAMVRSSFGKLEDGNQTEESGTGGWVGITQRYWMAAAVPDQDRPFTARFRTIERGEIDAFEASYVEQAIAVPAGESLASTTRIFAGAKELGVLQQVQNEVGIERFDMAINWGWLWFLTRPFVWLLTMLEGALGQFGLAILALTLMVKIVMFPLANRAYASMAKMKAVQPKMAEIKERYGADQQKQQQALMELYKTEKINPLAGCLPILPQIPIFFALYQTLFNAIEMRHAPFFGWIRDLSAADPTNIWNLFGLIPYDPTGIWLIGGVLGIGAWPIIMGLTMAAQQALNPPPPDPMQARIFAFLPIVFTFILAPFAAGLVIYWAWNNFLSVLQQYIIMRRHGNETQVDKLVARLLKRDRGD.

Transmembrane regions (helical) follow at residues 8 to 28 (LFIALGLILVILTGYQMFVMG), 363 to 385 (ALGQFGLAILALTLMVKIVMFPL), 430 to 450 (INPLAGCLPILPQIPIFFALY), 493 to 513 (IWLIGGVLGIGAWPIIMGLTM), and 531 to 551 (IFAFLPIVFTFILAPFAAGLV).

Belongs to the OXA1/ALB3/YidC family. Type 1 subfamily. As to quaternary structure, interacts with the Sec translocase complex via SecD. Specifically interacts with transmembrane segments of nascent integral membrane proteins during membrane integration.

The protein resides in the cell inner membrane. Its function is as follows. Required for the insertion and/or proper folding and/or complex formation of integral membrane proteins into the membrane. Involved in integration of membrane proteins that insert both dependently and independently of the Sec translocase complex, as well as at least some lipoproteins. Aids folding of multispanning membrane proteins. The protein is Membrane protein insertase YidC of Maricaulis maris (strain MCS10) (Caulobacter maris).